We begin with the raw amino-acid sequence, 67 residues long: Surface composition regulator (67 aa).

It belongs to the GlgS family.

In terms of biological role, major determinant of cell surface composition. Negatively regulates motility, adhesion and synthesis of biofilm exopolysaccharides. This is Surface composition regulator from Salmonella enteritidis PT4 (strain P125109).